Consider the following 478-residue polypeptide: F-box/kelch-repeat protein At1g51550 (478 aa).

Positions 1 to 20 are disordered; sequence MAAESTRNSSPPSTSQSSSP. Low complexity predominate over residues 9–20; sequence SSPPSTSQSSSP. The region spanning 18-64 is the F-box domain; sequence SSPIINLPDDHLLTILLLLPVDSILSFSMTCKRYKSLACSDSLWEAL. 2 Kelch repeats span residues 135-187 and 246-299; these read LVLF…VIGE and KMVV…CIRE.

This chain is F-box/kelch-repeat protein At1g51550, found in Arabidopsis thaliana (Mouse-ear cress).